The sequence spans 388 residues: Ribonuclease D (388 aa).

A 3'-5' exonuclease domain is found at 24-191 (QYVSDEASLN…LYPQLADKLK (168 aa)). Positions 230–310 (TEHQLAYLKV…QTADLSNPPE (81 aa)) constitute an HRDC domain.

This sequence belongs to the RNase D family. A divalent metal cation serves as cofactor.

It is found in the cytoplasm. It carries out the reaction Exonucleolytic cleavage that removes extra residues from the 3'-terminus of tRNA to produce 5'-mononucleotides.. In terms of biological role, exonuclease involved in the 3' processing of various precursor tRNAs. Initiates hydrolysis at the 3'-terminus of an RNA molecule and releases 5'-mononucleotides. This chain is Ribonuclease D, found in Shewanella sp. (strain ANA-3).